A 361-amino-acid polypeptide reads, in one-letter code: MLYNLLLPHIHNSHIANLFHYITFRSGLAIIITLSISFVTGPILIKFLRSLQKYGQPIRSDGPESHKTKAGTPTMGGIMIILSSCLSTLLLADLTNKYIWITLFGFISFGIIGFMDDYAKVKRNNHYGVRGKSKFLLQGIISLIIYVLLEYLDKNFSHLLNVPFFKNLSLDLNYFYMVFAIFVIVGSSNAVNLTDGLDGLATVPIAFTAGSFALISYLVGNLIYANYLQLTYIPNTGELTVLCAGLVGSCLGFLWFNAQPAEVFMGDTGSLSLGGVLGIISVITKHEIVLAIIGGLFVIETTSVILQVYYFKATKGKRIFKMAPLHHHFEKHGWAESKVVIRFWIISVIFSLIGLSSLKLR.

10 helical membrane passes run 28 to 48 (LAIIITLSISFVTGPILIKFL), 74 to 94 (TMGGIMIILSSCLSTLLLADL), 99 to 119 (IWITLFGFISFGIIGFMDDYA), 133 to 153 (SKFLLQGIISLIIYVLLEYLD), 168 to 188 (LSLDLNYFYMVFAIFVIVGSS), 203 to 223 (VPIAFTAGSFALISYLVGNLI), 236 to 256 (TGELTVLCAGLVGSCLGFLWF), 263 to 283 (VFMGDTGSLSLGGVLGIISVI), 288 to 308 (IVLAIIGGLFVIETTSVILQV), and 338 to 358 (KVVIRFWIISVIFSLIGLSSL).

The protein belongs to the glycosyltransferase 4 family. MraY subfamily. Mg(2+) serves as cofactor.

It is found in the cell inner membrane. It catalyses the reaction UDP-N-acetyl-alpha-D-muramoyl-L-alanyl-gamma-D-glutamyl-meso-2,6-diaminopimeloyl-D-alanyl-D-alanine + di-trans,octa-cis-undecaprenyl phosphate = di-trans,octa-cis-undecaprenyl diphospho-N-acetyl-alpha-D-muramoyl-L-alanyl-D-glutamyl-meso-2,6-diaminopimeloyl-D-alanyl-D-alanine + UMP. The protein operates within cell wall biogenesis; peptidoglycan biosynthesis. Its function is as follows. Catalyzes the initial step of the lipid cycle reactions in the biosynthesis of the cell wall peptidoglycan: transfers peptidoglycan precursor phospho-MurNAc-pentapeptide from UDP-MurNAc-pentapeptide onto the lipid carrier undecaprenyl phosphate, yielding undecaprenyl-pyrophosphoryl-MurNAc-pentapeptide, known as lipid I. The polypeptide is Phospho-N-acetylmuramoyl-pentapeptide-transferase (Rickettsia prowazekii (strain Madrid E)).